Reading from the N-terminus, the 194-residue chain is Translationally-controlled tumor protein homolog 2 (194 aa).

The region spanning 1–194 (MKLYKDLIGN…IKYGLLQVDV (194 aa)) is the TCTP domain.

Belongs to the TCTP family.

It localises to the cytoplasm. In terms of biological role, involved in calcium binding and microtubule stabilization. The sequence is that of Translationally-controlled tumor protein homolog 2 from Dictyostelium discoideum (Social amoeba).